A 414-amino-acid chain; its full sequence is Gamma-glutamyl phosphate reductase (414 aa).

This sequence belongs to the gamma-glutamyl phosphate reductase family.

Its subcellular location is the cytoplasm. The catalysed reaction is L-glutamate 5-semialdehyde + phosphate + NADP(+) = L-glutamyl 5-phosphate + NADPH + H(+). It functions in the pathway amino-acid biosynthesis; L-proline biosynthesis; L-glutamate 5-semialdehyde from L-glutamate: step 2/2. In terms of biological role, catalyzes the NADPH-dependent reduction of L-glutamate 5-phosphate into L-glutamate 5-semialdehyde and phosphate. The product spontaneously undergoes cyclization to form 1-pyrroline-5-carboxylate. This chain is Gamma-glutamyl phosphate reductase, found in Caldanaerobacter subterraneus subsp. tengcongensis (strain DSM 15242 / JCM 11007 / NBRC 100824 / MB4) (Thermoanaerobacter tengcongensis).